The sequence spans 383 residues: Deoxyguanosinetriphosphate triphosphohydrolase-like protein (383 aa).

In terms of domain architecture, HD spans 62–198 (RLTHSLEVST…ASLADDISYI (137 aa)).

It belongs to the dGTPase family. Type 2 subfamily.

In Rickettsia prowazekii (strain Madrid E), this protein is Deoxyguanosinetriphosphate triphosphohydrolase-like protein.